Here is a 97-residue protein sequence, read N- to C-terminus: Small ribosomal subunit protein bS20 (97 aa).

This sequence belongs to the bacterial ribosomal protein bS20 family.

Functionally, binds directly to 16S ribosomal RNA. This Prochlorococcus marinus subsp. pastoris (strain CCMP1986 / NIES-2087 / MED4) protein is Small ribosomal subunit protein bS20.